Here is a 119-residue protein sequence, read N- to C-terminus: Putative nitrilase-like protein YIL165C (119 aa).

Residues 1–82 (MKNIAYEGRL…EGLLTAEINT (82 aa)) enclose the CN hydrolase domain. Asp-21 acts as the Proton acceptor in catalysis.

It belongs to the carbon-nitrogen hydrolase superfamily. Nitrilase family.

The chain is Putative nitrilase-like protein YIL165C from Saccharomyces cerevisiae (strain ATCC 204508 / S288c) (Baker's yeast).